The sequence spans 383 residues: Sterol 24-C-methyltransferase ERG6 (383 aa).

Residue S2 is modified to N-acetylserine. S99 is modified (phosphoserine).

It belongs to the class I-like SAM-binding methyltransferase superfamily. Erg6/SMT family. Interacts with ERG28.

It is found in the microsome. The protein resides in the mitochondrion. The catalysed reaction is zymosterol + S-adenosyl-L-methionine = fecosterol + S-adenosyl-L-homocysteine + H(+). The protein operates within steroid metabolism; ergosterol biosynthesis; ergosterol from zymosterol: step 1/5. Its function is as follows. Sterol 24-C-methyltransferase; part of the third module of ergosterol biosynthesis pathway that includes the late steps of the pathway. ERG6 catalyzes the methyl transfer from S-adenosyl-methionine to the C-24 of zymosterol to form fecosterol. The third module or late pathway involves the ergosterol synthesis itself through consecutive reactions that mainly occur in the endoplasmic reticulum (ER) membrane. Firstly, the squalene synthase ERG9 catalyzes the condensation of 2 farnesyl pyrophosphate moieties to form squalene, which is the precursor of all steroids. Squalene synthase is crucial for balancing the incorporation of farnesyl diphosphate (FPP) into sterol and nonsterol isoprene synthesis. Secondly, the squalene epoxidase ERG1 catalyzes the stereospecific oxidation of squalene to (S)-2,3-epoxysqualene, which is considered to be a rate-limiting enzyme in steroid biosynthesis. Then, the lanosterol synthase ERG7 catalyzes the cyclization of (S)-2,3 oxidosqualene to lanosterol, a reaction that forms the sterol core. In the next steps, lanosterol is transformed to zymosterol through a complex process involving various demethylation, reduction and desaturation reactions. The lanosterol 14-alpha-demethylase ERG11 (also known as CYP51) catalyzes C14-demethylation of lanosterol to produce 4,4'-dimethyl cholesta-8,14,24-triene-3-beta-ol, which is critical for ergosterol biosynthesis. The C-14 reductase ERG24 reduces the C14=C15 double bond of 4,4-dimethyl-cholesta-8,14,24-trienol to produce 4,4-dimethyl-cholesta-8,24-dienol. 4,4-dimethyl-cholesta-8,24-dienol is substrate of the C-4 demethylation complex ERG25-ERG26-ERG27 in which ERG25 catalyzes the three-step monooxygenation required for the demethylation of 4,4-dimethyl and 4alpha-methylsterols, ERG26 catalyzes the oxidative decarboxylation that results in a reduction of the 3-beta-hydroxy group at the C-3 carbon to an oxo group, and ERG27 is responsible for the reduction of the keto group on the C-3. ERG28 has a role as a scaffold to help anchor ERG25, ERG26 and ERG27 to the endoplasmic reticulum and ERG29 regulates the activity of the iron-containing C4-methylsterol oxidase ERG25. Then, the sterol 24-C-methyltransferase ERG6 catalyzes the methyl transfer from S-adenosyl-methionine to the C-24 of zymosterol to form fecosterol. The C-8 sterol isomerase ERG2 catalyzes the reaction which results in unsaturation at C-7 in the B ring of sterols and thus converts fecosterol to episterol. The sterol-C5-desaturase ERG3 then catalyzes the introduction of a C-5 double bond in the B ring to produce 5-dehydroepisterol. The C-22 sterol desaturase ERG5 further converts 5-dehydroepisterol into ergosta-5,7,22,24(28)-tetraen-3beta-ol by forming the C-22(23) double bond in the sterol side chain. Finally, ergosta-5,7,22,24(28)-tetraen-3beta-ol is substrate of the C-24(28) sterol reductase ERG4 to produce ergosterol. In Saccharomyces cerevisiae (strain ATCC 204508 / S288c) (Baker's yeast), this protein is Sterol 24-C-methyltransferase ERG6.